The primary structure comprises 312 residues: MVDYYEVLGVQRYASPEDIKRAYRKVALKWHPDKNPENKEEAERKFKEVAEAYEVLSNVEKRDIYDKYGKEGLDGRGASHLDDEREYRFTFRKADDVFKEIFGERDPFSFHLFEDSLEGLLNSSRSPSGSRGRGAGSHVSRAYDHPALSGLSSYDTGYSSYVSLGHEGLTSFSSLALDDSGMGNYIPITPSGKVINGRNINTKKAFENRQEREAEDDSELISFLVNSVANEEHFTDKCNWRRQSFNNYSPNSYSSSNTTQYTLVDNNEQGTSWVTNKKEPSIFSAGFKEGGRRKKKKHKEGQKKKKSNKRNH.

One can recognise a J domain in the interval 3 to 69 (DYYEVLGVQR…EKRDIYDKYG (67 aa)). The segment at 272–312 (SWVTNKKEPSIFSAGFKEGGRRKKKKHKEGQKKKKSNKRNH) is disordered. Residues 291 to 312 (GRRKKKKHKEGQKKKKSNKRNH) show a composition bias toward basic residues.

Probably acts as a co-chaperone. The protein is DnaJ homolog subfamily B member 7 (Dnajb7) of Mus musculus (Mouse).